We begin with the raw amino-acid sequence, 650 residues long: MEESVASEGLEFKWGKKKGVGGKKKDVQFYESFTYDGDEYRLYDCVLVGNASEPDSTEPFIGMIIKIWEHANKHIPKKVKLLWFFKPSEIAPYLEGVPNVLANEVFLASGEGLGLANTNQLEAIGGKCSVLCISKDKRNPQPSDEKFNSADFVFCRAFDVGSCKVVDTIDDKIAGVDVKFIFNRACSEKEATAVQNIEADVNGKSDSLKPNGPLARGASGSVRKIEDSAFESSDCKENSNGCKEEKEKGHYQLAIKKSTLAEERSNKDSGSRGNHYNGKDQESEVKKQLTKQKSMPGEERYSNSFEASGSRTIHSISKKAQENDVKKQLTKQKSMPAGERYSQESSGLDDRPLKKQKLDGSVTVRDGWDTTILQNITSDGKKDTGSFKRPRDKVTIEEVPPEKRSFVKNRDLVVSVSEGKTTKTVTEKGISKKPSFGRAEDKMSADDNERNYQVTEVCRRPDAGKSKWFRSLPWEESMREAEKKGTVVLLQNLDPTYTSDEVEDIVYSALNQQCEARMIERTSVTIPHIGEALVIFKTREVAERVIRRLDEGCLLLSSGRPLVASFAKITPPGKPSLFSGHIKLHKTQTRREMRDAVATSHSSQPNNLEFDMAMEWCLHQARHEQASESVSKRQLEEMKSLRINFKLKLP.

The region spanning 38 to 169 (DEYRLYDCVL…VGSCKVVDTI (132 aa)) is the BAH domain. Disordered regions lie at residues 202 to 223 (NGKS…GSVR), 229 to 248 (AFES…EKEK), 257 to 359 (KSTL…QKLD), and 425 to 448 (VTEK…ADDN). Composition is skewed to basic and acidic residues over residues 259–270 (TLAEERSNKDSG) and 277–287 (NGKDQESEVKK). Residues 302 to 315 (SNSFEASGSRTIHS) are compositionally biased toward polar residues. 2 stretches are compositionally biased toward basic and acidic residues: residues 348-358 (LDDRPLKKQKL) and 438-448 (RAEDKMSADDN). Residues 486–569 (TVVLLQNLDP…RPLVASFAKI (84 aa)) enclose the RRM domain.

As to quaternary structure, component of the ASI1-AIPP1-EDM2 (AAE) RNA regulatory complex composed of at least AIPP1/EDM3, ASI1 and EDM2 and may contain CPL2, AIPP2 and AIPP3/BDT1. Binds directly to AIPP1/EDM3 and AIPP2.

Its function is as follows. Collaboratively with AIPP1/EDM3 and EDM2, the AAE complex regulates alternative RNA processing (e.g. alternative splicing) and epigenetic silencing (e.g. H3K9me2) of intronic heterochromatin-containing genes as well as genic heterochromatin-containing genes by promoting distal 3' polyadenylation; may associate with intronic heterochromatin and bind gene transcripts to modulate polyadenylation. Required to prevent promoter DNA hypermethylation and transcriptional silencing of some transgenes. Plays a similar role to that of the histone H3K9 demethylase JMJ25/IBM1 in preventing CHG methylation in the bodies of numerous genes. RNA-binding protein that ensures the proper expression of JMJ25/IBM1 full-length transcript by associating with an intronic heterochromatic repeat element of JMJ25/IBM1. Also modulates transposable elements (TE) expression. Contributes to a unique mechanism to deal with the collateral effect of silencing intronic repeat elements. This Arabidopsis thaliana (Mouse-ear cress) protein is Protein ANTI-SILENCING 1.